The chain runs to 397 residues: Succinyl-diaminopimelate desuccinylase (397 aa).

Zn(2+) is bound at residue H73. The active site involves D75. D106 is a Zn(2+) binding site. Residue E140 is the Proton acceptor of the active site. Zn(2+) is bound by residues E141, E169, and H366.

The protein belongs to the peptidase M20A family. DapE subfamily. As to quaternary structure, homodimer. Requires Zn(2+) as cofactor. The cofactor is Co(2+).

The catalysed reaction is N-succinyl-(2S,6S)-2,6-diaminopimelate + H2O = (2S,6S)-2,6-diaminopimelate + succinate. It participates in amino-acid biosynthesis; L-lysine biosynthesis via DAP pathway; LL-2,6-diaminopimelate from (S)-tetrahydrodipicolinate (succinylase route): step 3/3. Functionally, catalyzes the hydrolysis of N-succinyl-L,L-diaminopimelic acid (SDAP), forming succinate and LL-2,6-diaminopimelate (DAP), an intermediate involved in the bacterial biosynthesis of lysine and meso-diaminopimelic acid, an essential component of bacterial cell walls. This is Succinyl-diaminopimelate desuccinylase from Rhizobium leguminosarum bv. trifolii (strain WSM2304).